A 154-amino-acid chain; its full sequence is 8-oxo-dGTP diphosphatase (154 aa).

The 129-residue stretch at 1–129 (MPQLATICYI…DHTFVEWLLE (129 aa)) folds into the Nudix hydrolase domain. Gly38, Glu53, Glu56, and Glu57 together coordinate Mg(2+). A Nudix box motif is present at residues 38–59 (GKLERGETPQECAAREILEETG).

It belongs to the Nudix hydrolase family. Homotrimer. The cofactor is Mg(2+).

The catalysed reaction is 8-oxo-dGTP + H2O = 8-oxo-dGMP + diphosphate + H(+). Involved in the DNA repair system to avoid A.T to G.C transversions. Degrades 8-oxo-dGTP to the monophosphate, but is also active on all of the nucleoside triphosphates. The polypeptide is 8-oxo-dGTP diphosphatase (mutX) (Streptococcus pneumoniae serotype 4 (strain ATCC BAA-334 / TIGR4)).